The sequence spans 344 residues: tRNA N6-adenosine threonylcarbamoyltransferase (344 aa).

Positions 119 and 123 each coordinate Fe cation. Residues 141–145 (VVSGG), D174, G187, D191, and N280 each bind substrate. D310 is a Fe cation binding site.

This sequence belongs to the KAE1 / TsaD family. Requires Fe(2+) as cofactor.

The protein resides in the cytoplasm. It carries out the reaction L-threonylcarbamoyladenylate + adenosine(37) in tRNA = N(6)-L-threonylcarbamoyladenosine(37) in tRNA + AMP + H(+). In terms of biological role, required for the formation of a threonylcarbamoyl group on adenosine at position 37 (t(6)A37) in tRNAs that read codons beginning with adenine. Is involved in the transfer of the threonylcarbamoyl moiety of threonylcarbamoyl-AMP (TC-AMP) to the N6 group of A37, together with TsaE and TsaB. TsaD likely plays a direct catalytic role in this reaction. The protein is tRNA N6-adenosine threonylcarbamoyltransferase of Listeria monocytogenes serovar 1/2a (strain ATCC BAA-679 / EGD-e).